Here is a 443-residue protein sequence, read N- to C-terminus: Ribosomal protein uS12 methylthiotransferase RimO (443 aa).

The MTTase N-terminal domain occupies 10-120; that stretch reads PRVGFVSLGC…VMAAVHAQCP (111 aa). [4Fe-4S] cluster contacts are provided by C19, C55, C84, C152, C156, and C159. The region spanning 138–375 is the Radical SAM core domain; the sequence is LTPRHYAYLK…MALQAEISAR (238 aa). One can recognise a TRAM domain in the interval 378–443; it reads ARRVGTECTV…DEHDLYGRVL (66 aa).

It belongs to the methylthiotransferase family. RimO subfamily. It depends on [4Fe-4S] cluster as a cofactor.

It is found in the cytoplasm. The catalysed reaction is L-aspartate(89)-[ribosomal protein uS12]-hydrogen + (sulfur carrier)-SH + AH2 + 2 S-adenosyl-L-methionine = 3-methylsulfanyl-L-aspartate(89)-[ribosomal protein uS12]-hydrogen + (sulfur carrier)-H + 5'-deoxyadenosine + L-methionine + A + S-adenosyl-L-homocysteine + 2 H(+). Its function is as follows. Catalyzes the methylthiolation of an aspartic acid residue of ribosomal protein uS12. In Alkalilimnicola ehrlichii (strain ATCC BAA-1101 / DSM 17681 / MLHE-1), this protein is Ribosomal protein uS12 methylthiotransferase RimO.